Reading from the N-terminus, the 413-residue chain is Envelope glycoprotein M (413 aa).

Residues 1–19 (MGNYYYGGQESRLERISWR) lie on the Intravirion side of the membrane. Residues 20–40 (MWMVEAACYIVLVLLTLVSSF) traverse the membrane as a helical segment. Topologically, residues 41 to 88 (ASLSSTTGFPCFVGTVGESSFGGDLMGHGMTPARRDGVKIFFMSSPST) are virion surface. Residues 89-109 (LFVVFSAVFVWLVVAVYLLLG) form a helical membrane-spanning segment. The Intravirion portion of the chain corresponds to 110-133 (GVRVKMCNFDSSYGASELSSAVAT). A helical transmembrane segment spans residues 134–154 (MTSLVTLSITAWAWQVFVLML). Over 155-160 (SYRQLT) the chain is Virion surface. Residues 161–181 (LAAVAFVGIFIAGLVFMLSFA) form a helical membrane-spanning segment. The Intravirion segment spans residues 182–218 (SGGKSPENYATFNSQLKTVCKDVHAVITAFKAVVLNL). Residues 219-239 (FCVVFGVWHLMLVMLGAVIMV) form a helical membrane-spanning segment. Residues 240–251 (LNFGVSIPKATT) lie on the Virion surface side of the membrane. A helical transmembrane segment spans residues 252–272 (GALVVFIVLGLVYLMMIELVV). Residues 273 to 277 (SRYVH) are Intravirion-facing. The chain crosses the membrane as a helical span at residues 278–298 (VLLGPHLGMIIALGIAGTSAL). Topologically, residues 299–312 (SYAETLDEIMYASW) are virion surface. A helical transmembrane segment spans residues 313–333 (KPVAAGILGAFSVIVLALAVL). Over 334–413 (RAVRSYKFHK…EDVIYENMKY (80 aa)) the chain is Intravirion.

Belongs to the herpesviridae glycoprotein M family. Interacts (via N-terminus) with gN (via N-terminus). The gM-gN heterodimer forms the gCII complex.

The protein resides in the virion membrane. Its subcellular location is the host Golgi apparatus. It localises to the host trans-Golgi network. The protein localises to the host endosome membrane. It is found in the host nucleus inner membrane. In terms of biological role, envelope glycoprotein important for virion assembly and egress. Plays a role in the correct incorporation of gH-gL into virion membrane. Directs the glycoprotein N (gN) to the host trans-Golgi network. This is Envelope glycoprotein M from Psittacid herpesvirus 1 (isolate Amazon parrot/-/97-0001/1997) (PsHV-1).